Consider the following 348-residue polypeptide: Probable dual-specificity RNA methyltransferase RlmN (348 aa).

E92 (proton acceptor) is an active-site residue. Residues 98–331 (HPDRVTACIS…NEIRREKGTD (234 aa)) enclose the Radical SAM core domain. Cysteines 105 and 336 form a disulfide. Residues C112, C116, and C119 each coordinate [4Fe-4S] cluster. S-adenosyl-L-methionine is bound by residues 159–160 (GE), S191, 214–216 (SLH), and N290. C336 serves as the catalytic S-methylcysteine intermediate.

This sequence belongs to the radical SAM superfamily. RlmN family. [4Fe-4S] cluster serves as cofactor.

It is found in the cytoplasm. The enzyme catalyses adenosine(2503) in 23S rRNA + 2 reduced [2Fe-2S]-[ferredoxin] + 2 S-adenosyl-L-methionine = 2-methyladenosine(2503) in 23S rRNA + 5'-deoxyadenosine + L-methionine + 2 oxidized [2Fe-2S]-[ferredoxin] + S-adenosyl-L-homocysteine. It catalyses the reaction adenosine(37) in tRNA + 2 reduced [2Fe-2S]-[ferredoxin] + 2 S-adenosyl-L-methionine = 2-methyladenosine(37) in tRNA + 5'-deoxyadenosine + L-methionine + 2 oxidized [2Fe-2S]-[ferredoxin] + S-adenosyl-L-homocysteine. Its function is as follows. Specifically methylates position 2 of adenine 2503 in 23S rRNA and position 2 of adenine 37 in tRNAs. In Fervidobacterium nodosum (strain ATCC 35602 / DSM 5306 / Rt17-B1), this protein is Probable dual-specificity RNA methyltransferase RlmN.